A 359-amino-acid chain; its full sequence is RNA-binding protein 4B (359 aa).

2 consecutive RRM domains span residues 2-72 (VKLF…ASKN) and 78-148 (TKLH…LSTS). The CCHC-type zinc-finger motif lies at 160-177 (SGCYRCGKEGHWSKECPV). An interaction with TNPO3 region spans residues 196–359 (AVRPPYTMGY…YVDRARYSAF (164 aa)).

As to quaternary structure, interacts with TNPO3, which may mediate nuclear import of the protein.

Its subcellular location is the nucleus. The protein localises to the nucleolus. Its function is as follows. Required for the translational activation of PER1 mRNA in response to circadian clock. Binds directly to the 3'-UTR of the PER1 mRNA. This Sus scrofa (Pig) protein is RNA-binding protein 4B (RBM4B).